We begin with the raw amino-acid sequence, 112 residues long: UPF0060 membrane protein SCO3297 (112 aa).

A run of 4 helical transmembrane segments spans residues 8–28, 33–53, 62–82, and 88–108; these read ALFVVAALFEIGGAWLVWQGV, GWLWAAGGVLALGAYGFVATF, ILAAYGGIFVTGSILWGVVAD, and RWDIAGALVCLAGMALIMWAP.

Belongs to the UPF0060 family.

It localises to the cell membrane. The polypeptide is UPF0060 membrane protein SCO3297 (Streptomyces coelicolor (strain ATCC BAA-471 / A3(2) / M145)).